A 314-amino-acid chain; its full sequence is uncharacterized protein (314 aa).

2 stretches are compositionally biased toward basic residues: residues 1-16 and 49-65; these read MAGN…KAGT and AAKR…RRPA. The interval 1 to 73 is disordered; it reads MAGNSKRRGA…PARKTDETEL (73 aa). S-adenosyl-L-methionine-binding residues include Gly-266, Ile-286, and Leu-295.

The protein belongs to the class IV-like SAM-binding methyltransferase superfamily. RNA methyltransferase TrmH family.

This is an uncharacterized protein from Mycobacterium sp. (strain KMS).